A 212-amino-acid polypeptide reads, in one-letter code: Translation initiation factor IF-3 (212 aa).

Positions Leu-190–Ser-203 are enriched in basic and acidic residues. The interval Leu-190–Gln-212 is disordered.

This sequence belongs to the IF-3 family. As to quaternary structure, monomer.

The protein resides in the cytoplasm. In terms of biological role, IF-3 binds to the 30S ribosomal subunit and shifts the equilibrium between 70S ribosomes and their 50S and 30S subunits in favor of the free subunits, thus enhancing the availability of 30S subunits on which protein synthesis initiation begins. In Mycoplasmopsis fermentans (Mycoplasma fermentans), this protein is Translation initiation factor IF-3.